Reading from the N-terminus, the 736-residue chain is Phosphoribosylformylglycinamidine synthase subunit PurL (736 aa).

Residue His48 is part of the active site. The ATP site is built by Tyr51 and Lys90. A Mg(2+)-binding site is contributed by Glu92. Substrate-binding positions include 93 to 96 (SHNH) and Arg115. His94 acts as the Proton acceptor in catalysis. Position 116 (Asp116) interacts with Mg(2+). Gln239 is a substrate binding site. Asp267 contributes to the Mg(2+) binding site. 311 to 313 (ESQ) contacts substrate. Residues Asp492 and Gly529 each coordinate ATP. Asn530 serves as a coordination point for Mg(2+). Ser532 is a substrate binding site.

This sequence belongs to the FGAMS family. In terms of assembly, monomer. Part of the FGAM synthase complex composed of 1 PurL, 1 PurQ and 2 PurS subunits.

Its subcellular location is the cytoplasm. The enzyme catalyses N(2)-formyl-N(1)-(5-phospho-beta-D-ribosyl)glycinamide + L-glutamine + ATP + H2O = 2-formamido-N(1)-(5-O-phospho-beta-D-ribosyl)acetamidine + L-glutamate + ADP + phosphate + H(+). The protein operates within purine metabolism; IMP biosynthesis via de novo pathway; 5-amino-1-(5-phospho-D-ribosyl)imidazole from N(2)-formyl-N(1)-(5-phospho-D-ribosyl)glycinamide: step 1/2. Functionally, part of the phosphoribosylformylglycinamidine synthase complex involved in the purines biosynthetic pathway. Catalyzes the ATP-dependent conversion of formylglycinamide ribonucleotide (FGAR) and glutamine to yield formylglycinamidine ribonucleotide (FGAM) and glutamate. The FGAM synthase complex is composed of three subunits. PurQ produces an ammonia molecule by converting glutamine to glutamate. PurL transfers the ammonia molecule to FGAR to form FGAM in an ATP-dependent manner. PurS interacts with PurQ and PurL and is thought to assist in the transfer of the ammonia molecule from PurQ to PurL. This Bradyrhizobium diazoefficiens (strain JCM 10833 / BCRC 13528 / IAM 13628 / NBRC 14792 / USDA 110) protein is Phosphoribosylformylglycinamidine synthase subunit PurL.